A 331-amino-acid polypeptide reads, in one-letter code: Tryptophan--tRNA ligase (331 aa).

Residues 10–12 (QPS) and 18–19 (GN) contribute to the ATP site. Residues 11-19 (PSGQLTLGN) carry the 'HIGH' region motif. Asp133 is an L-tryptophan binding site. ATP-binding positions include 145 to 147 (GED), Val184, and 193 to 197 (KMSKS). The short motif at 193-197 (KMSKS) is the 'KMSKS' region element.

Belongs to the class-I aminoacyl-tRNA synthetase family. Homodimer.

The protein localises to the cytoplasm. It carries out the reaction tRNA(Trp) + L-tryptophan + ATP = L-tryptophyl-tRNA(Trp) + AMP + diphosphate + H(+). Catalyzes the attachment of tryptophan to tRNA(Trp). This is Tryptophan--tRNA ligase from Listeria monocytogenes serovar 1/2a (strain ATCC BAA-679 / EGD-e).